Here is a 369-residue protein sequence, read N- to C-terminus: Protein pxr-1 (369 aa).

Residues 1–23 form a disordered region; the sequence is MGLAAAKNKRKLGTDPNNTKWSR. One can recognise a G-patch domain in the interval 25-79; that stretch reads ETTFGQKILRAQGWQPGEFLGAKDAAHAVHHTEASSSHIKVTLKDDNLGLGAKRN. The segment at 147 to 338 is disordered; that stretch reads EEDGVPQSDT…GTSTPTVTSS (192 aa). Residues 153 to 167 are compositionally biased toward polar residues; it reads QSDTVDQQVETVPSQ. The span at 218 to 227 shows a compositional bias: basic residues; sequence SKKKEKKDKK. Basic and acidic residues predominate over residues 228–237; that stretch reads EKKDQKEKKD. Positions 267-292 are enriched in basic residues; it reads KSKKDKKKEKKEKKDKKKDKKEKKRK. The span at 304–318 shows a compositional bias: basic and acidic residues; that stretch reads EDSKSKAQKRTKDGA. Positions 322-338 are enriched in low complexity; it reads TSTPGGSGTSTPTVTSS.

It belongs to the PINX1 family.

It localises to the nucleus. It is found in the nucleolus. Its function is as follows. Involved in rRNA-processing at A0, A1 and A2 sites and negatively regulates telomerase. In Neurospora crassa (strain ATCC 24698 / 74-OR23-1A / CBS 708.71 / DSM 1257 / FGSC 987), this protein is Protein pxr-1 (pxr-1).